A 466-amino-acid polypeptide reads, in one-letter code: Ribulose bisphosphate carboxylase large chain (466 aa).

K4 carries the N6,N6,N6-trimethyllysine modification. Substrate-binding residues include N113 and T163. Catalysis depends on K165, which acts as the Proton acceptor. A substrate-binding site is contributed by K167. Positions 191, 193, and 194 each coordinate Mg(2+). An N6-carboxylysine modification is found at K191. Catalysis depends on H284, which acts as the Proton acceptor. Residues R285, H317, and S369 each coordinate substrate.

This sequence belongs to the RuBisCO large chain family. Type I subfamily. In terms of assembly, heterohexadecamer of 8 large chains and 8 small chains; disulfide-linked. The disulfide link is formed within the large subunit homodimers. Mg(2+) serves as cofactor. Post-translationally, the disulfide bond which can form in the large chain dimeric partners within the hexadecamer appears to be associated with oxidative stress and protein turnover.

The protein resides in the plastid. Its subcellular location is the chloroplast. It catalyses the reaction 2 (2R)-3-phosphoglycerate + 2 H(+) = D-ribulose 1,5-bisphosphate + CO2 + H2O. It carries out the reaction D-ribulose 1,5-bisphosphate + O2 = 2-phosphoglycolate + (2R)-3-phosphoglycerate + 2 H(+). RuBisCO catalyzes two reactions: the carboxylation of D-ribulose 1,5-bisphosphate, the primary event in carbon dioxide fixation, as well as the oxidative fragmentation of the pentose substrate in the photorespiration process. Both reactions occur simultaneously and in competition at the same active site. This is Ribulose bisphosphate carboxylase large chain from Aphelandra sinclairiana (Orange shrimp plant).